The primary structure comprises 364 residues: MAQQTPLYEQHTLCGARMVDFHGWMMPLHYGSQIDEHHAVRTDAGMFDVSHMTIVDLRGSRTREFLRYLLANDVAKLTKSGKALYSGMLNASGGVIDDLIVYYFTEDFFRLVVNSATREKDLSWITQHAEPFGIEITVRDDLSMIAVQGPNAQAKAATLFNDAQRQAVEGMKPFFGVQAGDLFIATTGYTGEAGYEIALPNEKAADFWRALVEAGVKPCGLGARDTLRLEAGMNLYGQEMDETISPLAANMGWTIAWEPADRDFIGREALEVQREHGTEKLVGLVMTEKGVLRNELPVRFTDAQGNQHEGIITSGTFSPTLGYSIALARVPEGIGETAIVQIRNREMPVKVTKPVFVRNGKAVA.

The protein belongs to the GcvT family. The glycine cleavage system is composed of four proteins: P, T, L and H.

The enzyme catalyses N(6)-[(R)-S(8)-aminomethyldihydrolipoyl]-L-lysyl-[protein] + (6S)-5,6,7,8-tetrahydrofolate = N(6)-[(R)-dihydrolipoyl]-L-lysyl-[protein] + (6R)-5,10-methylene-5,6,7,8-tetrahydrofolate + NH4(+). Its function is as follows. The glycine cleavage system catalyzes the degradation of glycine. The polypeptide is Aminomethyltransferase (Escherichia coli (strain 55989 / EAEC)).